The chain runs to 200 residues: Pyridoxal 5'-phosphate synthase subunit PdxT (200 aa).

Residue 52–54 (GES) coordinates L-glutamine. The active-site Nucleophile is cysteine 84. Residues arginine 116 and 145-146 (IR) each bind L-glutamine. Active-site charge relay system residues include histidine 181 and glutamate 183.

Belongs to the glutaminase PdxT/SNO family. In terms of assembly, in the presence of PdxS, forms a dodecamer of heterodimers. Only shows activity in the heterodimer.

It carries out the reaction aldehydo-D-ribose 5-phosphate + D-glyceraldehyde 3-phosphate + L-glutamine = pyridoxal 5'-phosphate + L-glutamate + phosphate + 3 H2O + H(+). The enzyme catalyses L-glutamine + H2O = L-glutamate + NH4(+). It participates in cofactor biosynthesis; pyridoxal 5'-phosphate biosynthesis. In terms of biological role, catalyzes the hydrolysis of glutamine to glutamate and ammonia as part of the biosynthesis of pyridoxal 5'-phosphate. The resulting ammonia molecule is channeled to the active site of PdxS. The chain is Pyridoxal 5'-phosphate synthase subunit PdxT from Sulfurisphaera tokodaii (strain DSM 16993 / JCM 10545 / NBRC 100140 / 7) (Sulfolobus tokodaii).